The sequence spans 243 residues: uncharacterized protein (243 aa).

The protein belongs to the mycobacterial PPE family.

It is found in the cell membrane. This is an uncharacterized protein from Mycobacterium tuberculosis (strain CDC 1551 / Oshkosh).